A 302-amino-acid polypeptide reads, in one-letter code: 4-hydroxy-tetrahydrodipicolinate synthase (302 aa).

Threonine 57 is a binding site for pyruvate. Tyrosine 145 (proton donor/acceptor) is an active-site residue. The active-site Schiff-base intermediate with substrate is lysine 173. Residue isoleucine 213 coordinates pyruvate.

This sequence belongs to the DapA family. Homotetramer; dimer of dimers.

Its subcellular location is the cytoplasm. The enzyme catalyses L-aspartate 4-semialdehyde + pyruvate = (2S,4S)-4-hydroxy-2,3,4,5-tetrahydrodipicolinate + H2O + H(+). It participates in amino-acid biosynthesis; L-lysine biosynthesis via DAP pathway; (S)-tetrahydrodipicolinate from L-aspartate: step 3/4. Its function is as follows. Catalyzes the condensation of (S)-aspartate-beta-semialdehyde [(S)-ASA] and pyruvate to 4-hydroxy-tetrahydrodipicolinate (HTPA). The sequence is that of 4-hydroxy-tetrahydrodipicolinate synthase from Corynebacterium aurimucosum (strain ATCC 700975 / DSM 44827 / CIP 107346 / CN-1) (Corynebacterium nigricans).